Here is a 462-residue protein sequence, read N- to C-terminus: tRNA(Ile2) 2-agmatinylcytidine synthetase TiaS (462 aa).

This sequence belongs to the TiaS family.

It is found in the cytoplasm. It catalyses the reaction cytidine(34) in tRNA(Ile2) + agmatine + ATP + H2O = 2-agmatinylcytidine(34) in tRNA(Ile2) + AMP + 2 phosphate + 2 H(+). Its function is as follows. ATP-dependent agmatine transferase that catalyzes the formation of 2-agmatinylcytidine (agm2C) at the wobble position (C34) of tRNA(Ile2), converting the codon specificity from AUG to AUA. This is tRNA(Ile2) 2-agmatinylcytidine synthetase TiaS from Haloquadratum walsbyi (strain DSM 16790 / HBSQ001).